Reading from the N-terminus, the 392-residue chain is MEVYLSEFINWKLYEFKKINELGTSTFRYYFKGKIVNLKNKRVSSNEVCYMFKLMDDTGIVELNYSLSKYSPKFEMLRQLQLGISVFVYSDVVCRVSGIRAWKLQIHSKNLESKIEATISEPEQIPCPGFGSDNIVPLSLVNDFKDGAFVNVLVAIQWKEEFEIFNNETKKSLPKQTIHVHDISGSAMIVLIGESQVKSALSWNNETILLIHNAIAYRTNTGMLELSIKDAIIQTLQSFDGKVLKLLNFSIKRKELIKINAYRLSTLEALEKIASQSGEAFGQVGVLIMQSKIKDLTKEGGLVYGNDLTGLRFADLISIIVDETGSVKNPKFSQKLLEEITNIAPTELSVLNEEQAMHLENVFLYRHYRVCVGFLNKQIYVFSSDEPLKSYI.

It localises to the cytoplasm. Its subcellular location is the nucleus. Has a role in meiosis. In Schizosaccharomyces pombe (strain 972 / ATCC 24843) (Fission yeast), this protein is Meiotically up-regulated gene 11 protein (mug11).